The chain runs to 226 residues: MTVVVVTGTDTGVGKTVACAALACHARQAGIEVAVCKPVQTGTQIGDDDLAEVARLSGVTELTGLVRYPQPLAPAAAAEHAGMALPTREQLLELIAGLDRPGRLILVEGAGGLLVELADASATLRDLAVELGALALVTVSVELGTLNHTALTLEALTTRGVACAGLVIGSWTGRPGAVQISNRSALARLAPMRATLPAGAGSMDATDFAAMSAAAFDRDWVTTLVH.

Position 12 to 17 (12 to 17) interacts with ATP; sequence GVGKTV. T16 is a binding site for Mg(2+). The active site involves K37. T41 is a substrate binding site. Residues D49, 108-111, 169-170, and 197-199 contribute to the ATP site; these read EGAG, GS, and PAG. 2 residues coordinate Mg(2+): D49 and E108.

The protein belongs to the dethiobiotin synthetase family. As to quaternary structure, homodimer. Mg(2+) serves as cofactor.

The protein resides in the cytoplasm. It catalyses the reaction (7R,8S)-7,8-diammoniononanoate + CO2 + ATP = (4R,5S)-dethiobiotin + ADP + phosphate + 3 H(+). It participates in cofactor biosynthesis; biotin biosynthesis; biotin from 7,8-diaminononanoate: step 1/2. Functionally, catalyzes a mechanistically unusual reaction, the ATP-dependent insertion of CO2 between the N7 and N8 nitrogen atoms of 7,8-diaminopelargonic acid (DAPA, also called 7,8-diammoniononanoate) to form a ureido ring. In Mycobacterium leprae (strain Br4923), this protein is ATP-dependent dethiobiotin synthetase BioD.